We begin with the raw amino-acid sequence, 1416 residues long: DNA-directed RNA polymerase subunit beta' (1416 aa).

The Zn(2+) site is built by Cys-71, Cys-73, Cys-86, and Cys-89. Asp-461, Asp-463, and Asp-465 together coordinate Mg(2+). Residues Cys-815, Cys-889, Cys-896, and Cys-899 each contribute to the Zn(2+) site.

This sequence belongs to the RNA polymerase beta' chain family. As to quaternary structure, the RNAP catalytic core consists of 2 alpha, 1 beta, 1 beta' and 1 omega subunit. When a sigma factor is associated with the core the holoenzyme is formed, which can initiate transcription. Requires Mg(2+) as cofactor. Zn(2+) is required as a cofactor.

The catalysed reaction is RNA(n) + a ribonucleoside 5'-triphosphate = RNA(n+1) + diphosphate. Functionally, DNA-dependent RNA polymerase catalyzes the transcription of DNA into RNA using the four ribonucleoside triphosphates as substrates. This is DNA-directed RNA polymerase subunit beta' from Haemophilus influenzae (strain PittGG).